Consider the following 83-residue polypeptide: Large ribosomal subunit protein bL31B (83 aa).

It belongs to the bacterial ribosomal protein bL31 family. Type B subfamily. Part of the 50S ribosomal subunit.

The protein is Large ribosomal subunit protein bL31B of Lactobacillus johnsonii (strain CNCM I-12250 / La1 / NCC 533).